Here is a 22-residue protein sequence, read N- to C-terminus: Brevinin-1OKc (22 aa).

Lysine amide is present on Lys-22.

In terms of tissue distribution, expressed by the skin glands.

It is found in the secreted. In terms of biological role, antimicrobial peptide. Active against Gram-negative bacterium E.coli (MIC=6 uM) and against Gram-positive bacterium S.aureus (MIC=12.5 uM). The polypeptide is Brevinin-1OKc (Nidirana okinavana (Kampira Falls frog)).